The following is a 387-amino-acid chain: Cysteine desulfurase (387 aa).

Pyridoxal 5'-phosphate contacts are provided by residues 72–73 (GT), asparagine 152, glutamine 180, and 200–202 (SAH). Lysine 203 carries the N6-(pyridoxal phosphate)lysine modification. Threonine 238 contacts pyridoxal 5'-phosphate. Catalysis depends on cysteine 323, which acts as the Cysteine persulfide intermediate. Residue cysteine 323 coordinates [2Fe-2S] cluster.

Belongs to the class-V pyridoxal-phosphate-dependent aminotransferase family. NifS/IscS subfamily. Homodimer. The cofactor is pyridoxal 5'-phosphate.

The enzyme catalyses (sulfur carrier)-H + L-cysteine = (sulfur carrier)-SH + L-alanine. In terms of biological role, catalyzes the removal of elemental sulfur atoms from cysteine to produce alanine. Seems to participate in the biosynthesis of the nitrogenase metalloclusters by providing the inorganic sulfur required for the Fe-S core formation. The polypeptide is Cysteine desulfurase (Cereibacter sphaeroides (Rhodobacter sphaeroides)).